Here is a 699-residue protein sequence, read N- to C-terminus: MAYQKVECQFNGQTLTLETGKMARQADGAVVVSFGGTKVLCTAVSAKQMREGQSFFPLTVNYQEKFYAGGKIPGSFFRRERGATERETLVCRLIDRPLRPLFPKGYMFETQIMPTVISVDEQNDPDTLAMVGASAAIAVSDIPFDGPVAAVRVGRVEGNLIANPTIEQRAESDMDIIVSGSRDAIIMVEGETRFISEQEMLDALFFAHEAIQPLIDVQLELVKIAGKEKREFSVPEIDPAVVEKVAELAETRLSEAVKIRTKQDRYAAVAEIKTEILETLAADFEDQEDDISEAFGNLQKRLVRQMVARDKVRIDGRDKNTIRPITCEIGLLPRAHGSALFTRGETQALVAAALGTSKDEQRMDNVQSMEFKKFMLHYNFPPFCVGETSMRLFPGRREIGHGMLAERSIAQVLPNHDDFPYTLRVVSDILESNGSSSMASVCGASLALMDAGVPVSEAVAGIAMGLIKEGDDIVVLSDILGDEDHLGDMDFKVTGTREGITALQMDIKIKGVSKEIMQQALEQAREGRLHILDKMAEAITAPRSDLSPYAPRITTIQVKPDQVRTVIGPGGKNVRGIIEATGCAIDIEDDGRINIASADGDACKAAIKMIRNLTQEAVVGKLYMATVKKIMEFGAFVEIFPGTEGLVHISELAKERVKKVTDILQEGDQVLVKCLDIDRQGKIKLSRKEALGQSLPEEG.

The Mg(2+) site is built by Asp-484 and Asp-490. The 60-residue stretch at Pro-551–Ile-610 folds into the KH domain. Residues Gly-620 to Lys-688 form the S1 motif domain.

Belongs to the polyribonucleotide nucleotidyltransferase family. The cofactor is Mg(2+).

The protein resides in the cytoplasm. The enzyme catalyses RNA(n+1) + phosphate = RNA(n) + a ribonucleoside 5'-diphosphate. Functionally, involved in mRNA degradation. Catalyzes the phosphorolysis of single-stranded polyribonucleotides processively in the 3'- to 5'-direction. This chain is Polyribonucleotide nucleotidyltransferase, found in Syntrophotalea carbinolica (strain DSM 2380 / NBRC 103641 / GraBd1) (Pelobacter carbinolicus).